The sequence spans 296 residues: uncharacterized protein (296 aa).

The signal sequence occupies residues 1 to 20 (MRKFIFVLLTLLLVSPFSFA).

This is an uncharacterized protein from Escherichia coli (strain K12).